The chain runs to 269 residues: 3-deoxy-manno-octulosonate cytidylyltransferase (269 aa).

The protein belongs to the KdsB family.

The protein localises to the cytoplasm. It catalyses the reaction 3-deoxy-alpha-D-manno-oct-2-ulosonate + CTP = CMP-3-deoxy-beta-D-manno-octulosonate + diphosphate. It functions in the pathway nucleotide-sugar biosynthesis; CMP-3-deoxy-D-manno-octulosonate biosynthesis; CMP-3-deoxy-D-manno-octulosonate from 3-deoxy-D-manno-octulosonate and CTP: step 1/1. The protein operates within bacterial outer membrane biogenesis; lipopolysaccharide biosynthesis. Functionally, activates KDO (a required 8-carbon sugar) for incorporation into bacterial lipopolysaccharide in Gram-negative bacteria. This chain is 3-deoxy-manno-octulosonate cytidylyltransferase, found in Cupriavidus necator (strain ATCC 17699 / DSM 428 / KCTC 22496 / NCIMB 10442 / H16 / Stanier 337) (Ralstonia eutropha).